Here is a 189-residue protein sequence, read N- to C-terminus: Leucine repeat adapter protein 25 (189 aa).

Phosphoserine is present on S28. A disordered region spans residues 54 to 83 (ELSRAARAPDGPRHAAGAANAGPAAGPRRP). Residues 67–83 (HAAGAANAGPAAGPRRP) show a composition bias toward low complexity. Residues 86-114 (LDSALAALRKEMVGLRQLDMSLLCQLWGL) form an LRR repeat. A disordered region spans residues 141 to 175 (DSSYPPDAGLSDDEEPPDASLPPDPPPLTVPQTHN). The span at 159–169 (ASLPPDPPPLT) shows a compositional bias: pro residues. S188 bears the Phosphoserine mark.

This sequence belongs to the FAM89 family. In terms of assembly, interacts with SKI. Interacts (via LRR repeat) with CDC42BPA (via AGC-kinase C-terminal domain), CDC42BPB (via AGC-kinase C-terminal domain) and LIMK1 (via LIM zinc-binding domains). Forms a tripartite complex with CDC42BPA, CDC42BPB and LIMK1.

The protein localises to the cytoplasm. It localises to the cell projection. The protein resides in the lamellipodium. In terms of biological role, negatively regulates TGF-beta-induced signaling; in cooperation with SKI prevents the translocation of SMAD2 from the nucleus to the cytoplasm in response to TGF-beta. Acts as an adapter that mediates the specific recognition of LIMK1 by CDC42BPA and CDC42BPB in the lamellipodia. LRAP25-mediated CDC42BPA/CDC42BPB targeting to LIMK1 and the lamellipodium results in LIMK1 activation and the subsequent phosphorylation of CFL1 which is important for lamellipodial F-actin regulation. The protein is Leucine repeat adapter protein 25 (FAM89B) of Homo sapiens (Human).